We begin with the raw amino-acid sequence, 333 residues long: DNA-directed RNA polymerase subunit alpha (333 aa).

Residues 1-234 (MQSSVNEFLT…QQLAAFVDLK (234 aa)) are alpha N-terminal domain (alpha-NTD). Residues 248-333 (IDPILLRPVD…SLKKDDKATA (86 aa)) form an alpha C-terminal domain (alpha-CTD) region.

The protein belongs to the RNA polymerase alpha chain family. Homodimer. The RNAP catalytic core consists of 2 alpha, 1 beta, 1 beta' and 1 omega subunit. When a sigma factor is associated with the core the holoenzyme is formed, which can initiate transcription.

It catalyses the reaction RNA(n) + a ribonucleoside 5'-triphosphate = RNA(n+1) + diphosphate. Its function is as follows. DNA-dependent RNA polymerase catalyzes the transcription of DNA into RNA using the four ribonucleoside triphosphates as substrates. In Pseudomonas aeruginosa (strain UCBPP-PA14), this protein is DNA-directed RNA polymerase subunit alpha.